The primary structure comprises 576 residues: Proline--tRNA ligase (576 aa).

The protein belongs to the class-II aminoacyl-tRNA synthetase family. ProS type 1 subfamily. In terms of assembly, homodimer.

The protein resides in the cytoplasm. It carries out the reaction tRNA(Pro) + L-proline + ATP = L-prolyl-tRNA(Pro) + AMP + diphosphate. In terms of biological role, catalyzes the attachment of proline to tRNA(Pro) in a two-step reaction: proline is first activated by ATP to form Pro-AMP and then transferred to the acceptor end of tRNA(Pro). As ProRS can inadvertently accommodate and process non-cognate amino acids such as alanine and cysteine, to avoid such errors it has two additional distinct editing activities against alanine. One activity is designated as 'pretransfer' editing and involves the tRNA(Pro)-independent hydrolysis of activated Ala-AMP. The other activity is designated 'posttransfer' editing and involves deacylation of mischarged Ala-tRNA(Pro). The misacylated Cys-tRNA(Pro) is not edited by ProRS. The chain is Proline--tRNA ligase from Trichlorobacter lovleyi (strain ATCC BAA-1151 / DSM 17278 / SZ) (Geobacter lovleyi).